The chain runs to 149 residues: Small ribosomal subunit protein bS6 (149 aa).

A disordered region spans residues 93–149; that stretch reads VGKHEEGPSAMMQKRDRDDRPRRDGDRPDRGGFGDRGPRPDRGDRDDRPRRPREDRA. Basic and acidic residues predominate over residues 94 to 149; it reads GKHEEGPSAMMQKRDRDDRPRRDGDRPDRGGFGDRGPRPDRGDRDDRPRRPREDRA.

It belongs to the bacterial ribosomal protein bS6 family.

Functionally, binds together with bS18 to 16S ribosomal RNA. The protein is Small ribosomal subunit protein bS6 of Rhizobium meliloti (strain 1021) (Ensifer meliloti).